Reading from the N-terminus, the 443-residue chain is Serine/threonine-protein phosphatase 2A 55 kDa regulatory subunit B beta isoform (443 aa).

WD repeat units follow at residues 22-61, 87-128, 171-209, 220-260, 279-317, 334-375, and 410-443; these read TEAD…KSQP, EIEE…KRPE, AHTY…RSFN, ELTE…LCDN, EIIS…KPLE, ENDC…DVTL, and DFSK…DKVN.

This sequence belongs to the phosphatase 2A regulatory subunit B family. PP2A consists of a common heterodimeric core enzyme, composed of a 36 kDa catalytic subunit (subunit C) and a 65 kDa constant regulatory subunit (PR65 or subunit A), that associates with a variety of regulatory subunits.

It localises to the cytoplasm. Its subcellular location is the cytoskeleton. The protein resides in the membrane. The B regulatory subunit might modulate substrate selectivity and catalytic activity, and might also direct the localization of the catalytic enzyme to a particular subcellular compartment. This is Serine/threonine-protein phosphatase 2A 55 kDa regulatory subunit B beta isoform (ppp2r2b) from Carassius auratus (Goldfish).